We begin with the raw amino-acid sequence, 411 residues long: MNPIQSFHCKLRGLATTLDSETARLLRALDGEDSDFEDSPGRILHDLHSEVQTLKDNVNALLDEARLENQESTRFKKATKILMEKNSADVRKLREFFQKYGYQARDKEDSGCEHRVNNSTPELAVCKDIQKAGVKELSDPCVPSGSVSEEPLRSPQLSDFGLQRYIISQVPANPPQTAASLKEERVAETPPAKDPSVQVLKTPRCALRMDDFECETPKLEHFGISEHTMCLNEDYTMGLKNMKNIKSSLLSGVSGEAIGTGPVTSDNSFAIPGPIIQQMEENDVEYVSSPLPPKFCTPGLKIPSTMDRTDLVSIDYPLSKPNSSSTDLEIKDCVPLILNSDECYQSFAEPPSSAITSCENFATPSPPKVTAIPEDILQMITKHSSNLASPLDVKVMPRRKGTRGAANKENW.

5 positions are modified to phosphoserine: Ser34, Ser119, Ser138, Ser154, and Ser158. The binds the NDC80 complex stretch occupies residues 102–410 (YQARDKEDSG…GTRGAANKEN (309 aa)). 2 positions are modified to phosphothreonine: Thr189 and Thr216. The segment at 195–410 (PSVQVLKTPR…GTRGAANKEN (216 aa)) is binds microtubules and contacts the microtubule-binding domain of SKA1. Residue Ser289 is modified to Phosphoserine. At Thr297 the chain carries Phosphothreonine. Phosphoserine occurs at positions 324 and 352. The tract at residues 349-410 (EPPSSAITSC…GTRGAANKEN (62 aa)) is required for localization to kinetochores. Phosphothreonine is present on Thr363.

This sequence belongs to the SKA3 family. In terms of assembly, component of the SKA complex, composed of SKA1, SKA2 and SKA3. The SKA complex is a homodimer organized around a central W-shaped coiled-coil structure, formed by the interacting domains of SKA1, SKA2, and SKA3, each end of the 'W' is extended further by the C-terminal microtubule-binding domains of SKA1 and SKA3; the complex forms extended structures on microtubules. Interacts with the NDC80-NUF2 heterodimer of the NDC80 complex (via coiled coils); the interaction localizes the SKA complex to the kinetochore and is required to establish kinetochore-microtubule end-on attachments. Interacts with polo-like kinase PLK1.

Its subcellular location is the cytoplasm. The protein localises to the cytoskeleton. It localises to the spindle. The protein resides in the chromosome. It is found in the centromere. Its subcellular location is the kinetochore. The protein localises to the microtubule organizing center. It localises to the centrosome. Its function is as follows. Component of the SKA complex, a microtubule plus end-binding complex of the outer kinetochore that stabilizes spindle microtubule-kinetochore attachments, promotes alignment of chromosomes at the mitotic spindle equator (chromosome congression) and assists suppression of the spindle assembly checkpoint. Kinetochores, consisting of a centromere-associated inner segment and a microtubule-contacting outer segment, play a crucial role in chromosome segregation by mediating the physical connection between centromeric DNA and spindle microtubules. The outer kinetochore is made up of the ten-subunit KMN network complex, comprising the MIS12, NDC80 and KNL1 complexes, and auxiliary microtubule-associated components such as the SKA complex; together they connect the outer kinetochore with the inner kinetochore, bind microtubules, and mediate interactions with mitotic checkpoint proteins that delay anaphase until chromosomes are bioriented on the spindle. The SKA complex is loaded onto bioriented kinetochores and it facilitates chromosome congression by stabilizing microtubules together with MAPRE1, and end-on attachment of the NDC80 complex to depolymerizing spindle microtubules, thereby assisting the poleward-moving kinetochore in withstanding microtubule pulling forces. The complex associates with dynamic microtubule plus-ends and can track both depolymerizing and elongating microtubules. The complex recruits protein phosphatase 1 (PP1) to the kinetochore in prometaphase and metaphase, to oppose spindle assembly checkpoint signaling and promote the onset of anaphase. Within the complex, binds microtubules but with a much lower affinity than SKA1. Promotes stability of the polo-like kinase PLK1 protein. During meiosis the SKA complex stabilizes the meiotic spindle and is required for its migration to the cortex. This is SKA complex subunit 3 (Ska3) from Mus musculus (Mouse).